Here is an 81-residue protein sequence, read N- to C-terminus: MGKINLMLRQIVCLPIKMYQYFISPLITPCCRYYPSCSEYADSAIKHYGVIKGLLMALNRLSRCHPWSKGGYDPLFPNDKN.

It belongs to the UPF0161 family.

The protein resides in the cell inner membrane. In terms of biological role, could be involved in insertion of integral membrane proteins into the membrane. This is Putative membrane protein insertion efficiency factor from Legionella pneumophila (strain Lens).